The primary structure comprises 559 residues: Estrogen receptor beta (559 aa).

Residues 1–155 (MAVACSPEKD…SSGGKADLHF (155 aa)) are modulating. A disordered region spans residues 128–148 (TSSKSARRRSQENEEGEVSSG). 2 NR C4-type zinc fingers span residues 156–176 (CAVC…CEGC) and 192–216 (CPAT…LHKC). Residues 156-221 (CAVCHDYASG…RLHKCYNVGM (66 aa)) constitute a DNA-binding region (nuclear receptor). The segment covering 243-254 (RLSSQGRTSGPS) has biased composition (polar residues). Residues 243–269 (RLSSQGRTSGPSVLNGPAVGPLNTPQP) are disordered. The NR LBD domain occupies 273–509 (TSKQLIERIM…DLLLEMLDAH (237 aa)). The tract at residues 514-559 (SRLPRRSPQQETVEQCDAPARPHSPGTSGPTNTWTPSCTGGRGEPQ) is disordered. The segment covering 538–551 (PGTSGPTNTWTPSC) has biased composition (polar residues).

This sequence belongs to the nuclear hormone receptor family. NR3 subfamily. Binds DNA as a homodimer. Can form a heterodimer with ER-alpha.

It is found in the nucleus. In terms of biological role, binds estrogens with an affinity similar to that of ER-alpha, and activates expression of reporter genes containing estrogen response elements (ERE) in an estrogen-dependent manner. This chain is Estrogen receptor beta (esr2), found in Sparus aurata (Gilthead sea bream).